The following is a 181-amino-acid chain: ATP synthase subunit b (181 aa).

The helical transmembrane segment at 16-36 (LIPPIPELVIGLIAFVIVFGF) threads the bilayer.

This sequence belongs to the ATPase B chain family. As to quaternary structure, F-type ATPases have 2 components, F(1) - the catalytic core - and F(0) - the membrane proton channel. F(1) has five subunits: alpha(3), beta(3), gamma(1), delta(1), epsilon(1). F(0) has three main subunits: a(1), b(2) and c(10-14). The alpha and beta chains form an alternating ring which encloses part of the gamma chain. F(1) is attached to F(0) by a central stalk formed by the gamma and epsilon chains, while a peripheral stalk is formed by the delta and b chains.

The protein resides in the cell membrane. In terms of biological role, f(1)F(0) ATP synthase produces ATP from ADP in the presence of a proton or sodium gradient. F-type ATPases consist of two structural domains, F(1) containing the extramembraneous catalytic core and F(0) containing the membrane proton channel, linked together by a central stalk and a peripheral stalk. During catalysis, ATP synthesis in the catalytic domain of F(1) is coupled via a rotary mechanism of the central stalk subunits to proton translocation. Its function is as follows. Component of the F(0) channel, it forms part of the peripheral stalk, linking F(1) to F(0). The polypeptide is ATP synthase subunit b (Streptomyces lividans).